The sequence spans 172 residues: Exocyst complex component 1-like (172 aa).

This chain is Exocyst complex component 1-like, found in Mus musculus (Mouse).